The sequence spans 404 residues: Probable tRNA sulfurtransferase (404 aa).

Residues 60–165 form the THUMP domain; that stretch reads QPVAESLKQI…EEAAYISYET (106 aa). ATP is bound by residues 183-184, 208-209, R265, G287, and Q296; these read ML and HF.

This sequence belongs to the ThiI family.

Its subcellular location is the cytoplasm. The enzyme catalyses [ThiI sulfur-carrier protein]-S-sulfanyl-L-cysteine + a uridine in tRNA + 2 reduced [2Fe-2S]-[ferredoxin] + ATP + H(+) = [ThiI sulfur-carrier protein]-L-cysteine + a 4-thiouridine in tRNA + 2 oxidized [2Fe-2S]-[ferredoxin] + AMP + diphosphate. It catalyses the reaction [ThiS sulfur-carrier protein]-C-terminal Gly-Gly-AMP + S-sulfanyl-L-cysteinyl-[cysteine desulfurase] + AH2 = [ThiS sulfur-carrier protein]-C-terminal-Gly-aminoethanethioate + L-cysteinyl-[cysteine desulfurase] + A + AMP + 2 H(+). It participates in cofactor biosynthesis; thiamine diphosphate biosynthesis. In terms of biological role, catalyzes the ATP-dependent transfer of a sulfur to tRNA to produce 4-thiouridine in position 8 of tRNAs, which functions as a near-UV photosensor. Also catalyzes the transfer of sulfur to the sulfur carrier protein ThiS, forming ThiS-thiocarboxylate. This is a step in the synthesis of thiazole, in the thiamine biosynthesis pathway. The sulfur is donated as persulfide by IscS. The chain is Probable tRNA sulfurtransferase from Streptococcus gordonii (strain Challis / ATCC 35105 / BCRC 15272 / CH1 / DL1 / V288).